A 428-amino-acid polypeptide reads, in one-letter code: Hemagglutinin-esterase (428 aa).

The N-terminal stretch at 1–19 (MCIAMAPRTLLLLIXCQLV) is a signal peptide. The segment at 9–129 (TLLLLIXCQL…DNKRWMGNKA (121 aa)) is esterase domain 1. Residues 20 to 404 (FGFNEPLNIV…PVCIYDPLPV (385 aa)) lie on the Virion surface side of the membrane. Ser-42 functions as the Nucleophile in the catalytic mechanism. Cysteines 46 and 67 form a disulfide. Asn-91, Asn-149, Asn-193, Asn-243, and Asn-313 each carry an N-linked (GlcNAc...) asparagine; by host glycan. The cysteines at positions 115 and 164 are disulfide-linked. Residues 130 to 278 (RFYARVYEKM…GNYKAVSLEY (149 aa)) form a receptor binding region. Intrachain disulfides connect Cys-199-Cys-288 and Cys-207-Cys-261. The tract at residues 279-392 (LLSLPSKAIC…HCPTAANIGY (114 aa)) is esterase domain 2. The cysteines at positions 319 and 324 are disulfide-linked. Asn-328 and Asn-332 each carry an N-linked (GlcNAc...) asparagine; by host glycan. Residues Asp-339 and His-342 each act as charge relay system in the active site. N-linked (GlcNAc...) asparagine; by host glycosylation is found at Asn-357 and Asn-371. A disulfide bridge connects residues Cys-360 and Cys-384. Residues 405-425 (ILLGVLLGIAVLIIVFLNVLF) traverse the membrane as a helical segment. Over 426–428 (YDG) the chain is Intravirion.

Belongs to the influenza type C/coronaviruses hemagglutinin-esterase family. In terms of assembly, homodimer; disulfide-linked. Forms a complex with the M protein in the pre-Golgi. Associates then with S-M complex to form a ternary complex S-M-HE. In terms of processing, N-glycosylated in the RER. Post-translationally, N-glycosylated in the host RER.

It is found in the virion membrane. The protein localises to the host cell membrane. It carries out the reaction N-acetyl-9-O-acetylneuraminate + H2O = N-acetylneuraminate + acetate + H(+). It catalyses the reaction N-acetyl-4-O-acetylneuraminate + H2O = N-acetylneuraminate + acetate + H(+). Its function is as follows. Structural protein that makes short spikes at the surface of the virus. Contains receptor binding and receptor-destroying activities. Mediates de-O-acetylation of N-acetyl-4-O-acetylneuraminic acid, which is probably the receptor determinant recognized by the virus on the surface of erythrocytes and susceptible cells. This receptor-destroying activity is important for virus release as it probably helps preventing self-aggregation and ensures the efficient spread of the progeny virus from cell to cell. May serve as a secondary viral attachment protein for initiating infection, the spike protein being the major one. May become a target for both the humoral and the cellular branches of the immune system. The sequence is that of Hemagglutinin-esterase from Mus musculus (Mouse).